Here is a 217-residue protein sequence, read N- to C-terminus: Adenylate kinase (217 aa).

Residue 10–15 (GIGKGT) coordinates ATP. Positions 30 to 59 (ATGDIFRKNFKENTELGILIKKIIAQGLLV) are NMP. AMP-binding positions include T31, R36, 57-59 (LLV), 85-88 (GFPR), and Q92. The segment at 126-163 (GRRICPECGKVYHIENIPPKTPGICDKDQKTLIQREDD) is LID. R127 is an ATP binding site. Zn(2+)-binding residues include C130 and C133. 136-137 (VY) contributes to the ATP binding site. C150 and D153 together coordinate Zn(2+). AMP is bound by residues R160 and R171. ATP is bound at residue Q199.

The protein belongs to the adenylate kinase family. As to quaternary structure, monomer.

It localises to the cytoplasm. The catalysed reaction is AMP + ATP = 2 ADP. It functions in the pathway purine metabolism; AMP biosynthesis via salvage pathway; AMP from ADP: step 1/1. Functionally, catalyzes the reversible transfer of the terminal phosphate group between ATP and AMP. Plays an important role in cellular energy homeostasis and in adenine nucleotide metabolism. This is Adenylate kinase from Onion yellows phytoplasma (strain OY-M).